A 1481-amino-acid chain; its full sequence is Cystic fibrosis transmembrane conductance regulator (1481 aa).

Residues methionine 1–phenylalanine 77 are Cytoplasmic-facing. A helical transmembrane segment spans residues phenylalanine 78–glutamine 98. An ABC transmembrane type-1 1 domain is found at phenylalanine 81 to leucine 365. The Extracellular portion of the chain corresponds to proline 99 to tyrosine 122. The chain crosses the membrane as a helical span at residues leucine 123–histidine 146. Residues histidine 147–leucine 195 are Cytoplasmic-facing. Residues alanine 196 to tryptophan 216 traverse the membrane as a helical segment. Residues glutamate 217 to serine 222 are Extracellular-facing. A helical membrane pass occupies residues alanine 223 to methionine 243. The Cytoplasmic segment spans residues methionine 244–lysine 298. The helical transmembrane segment at alanine 299–phenylalanine 319 threads the bilayer. The Extracellular portion of the chain corresponds to leucine 320 to threonine 339. The chain crosses the membrane as a helical span at residues isoleucine 340–valine 358. At glutamine 359–serine 858 the chain is on the cytoplasmic side. ATP-binding positions include tryptophan 401, serine 434, glycine 458–threonine 465, and glutamine 493. Residues asparagine 423–glycine 646 form the ABC transporter 1 domain. Residue cysteine 524 is the site of S-palmitoyl cysteine attachment. Phosphoserine is present on residues serine 549 and serine 660. The tract at residues serine 654–glutamate 831 is disordered R region. The residue at position 670 (serine 670) is a Phosphoserine; by PKA. Serine 686 is modified (phosphoserine). Lysine 688 participates in a covalent cross-link: Glycyl lysine isopeptide (Lys-Gly) (interchain with G-Cter in ubiquitin). Phosphoserine occurs at positions 700 and 712. Threonine 717 bears the Phosphothreonine mark. A phosphoserine mark is found at serine 737, serine 753, serine 768, serine 790, serine 795, and serine 813. The helical transmembrane segment at leucine 859–valine 879 threads the bilayer. The ABC transmembrane type-1 2 domain occupies leucine 859–serine 1155. Residues leucine 880 to isoleucine 918 lie on the Extracellular side of the membrane. 3 N-linked (GlcNAc...) asparagine glycosylation sites follow: asparagine 894, asparagine 900, and asparagine 909. A discontinuously helical transmembrane segment spans residues tyrosine 919–histidine 939. The Cytoplasmic portion of the chain corresponds to threonine 940–threonine 990. A helical membrane pass occupies residues isoleucine 991 to leucine 1011. Residues glutamine 1012–proline 1013 are Extracellular-facing. A helical transmembrane segment spans residues tyrosine 1014–leucine 1034. Topologically, residues glutamine 1035 to threonine 1095 are cytoplasmic. A helical membrane pass occupies residues leucine 1096 to phenylalanine 1116. Over isoleucine 1117–glycine 1130 the chain is Extracellular. A helical membrane pass occupies residues isoleucine 1131–isoleucine 1151. The Cytoplasmic portion of the chain corresponds to aspartate 1152–leucine 1481. In terms of domain architecture, ABC transporter 2 spans methionine 1211–histidine 1444. Residues tyrosine 1220 and glycine 1245–serine 1252 each bind ATP. Residues arginine 1387–leucine 1481 form an interaction with GORASP2 region. Cysteine 1396 carries the S-palmitoyl cysteine lipid modification. Phosphoserine is present on residues serine 1445 and serine 1457. The segment at histidine 1453 to leucine 1481 is disordered. The segment covering glutamate 1471–leucine 1481 has biased composition (acidic residues). Residues threonine 1479–leucine 1481 carry the PDZ-binding motif.

The protein belongs to the ABC transporter superfamily. ABCC family. CFTR transporter (TC 3.A.1.202) subfamily. As to quaternary structure, monomer; does not require oligomerization for channel activity. May form oligomers in the membrane. Interacts with SLC26A3, SLC26A6 and NHERF1. Interacts with SHANK2. Interacts with MYO6. Interacts (via C-terminus) with GOPC (via PDZ domain); this promotes CFTR internalization and thereby decreases channel activity. Interacts with SLC4A7 through NHERF1. Found in a complex with MYO5B and RAB11A. Interacts with ANO1. Interacts with SLC26A8. Interacts with AHCYL1; the interaction increases CFTR activity. Interacts with CSE1L. The core-glycosylated form interacts with GORASP2 (via PDZ GRASP-type 1 domain) in respone to ER stress. Interacts with MARCHF2; the interaction leads to CFTR ubiqtuitination and degradation. Interacts with ADGRG2. N-glycosylated. Post-translationally, phosphorylated; cAMP treatment promotes phosphorylation and activates the channel. Dephosphorylation decreases the ATPase activity (in vitro). Phosphorylation at PKA sites activates the channel. Phosphorylation at PKC sites enhances the response to phosphorylation by PKA. Phosphorylated by AMPK; this inhibits channel activity. In terms of processing, ubiquitinated, leading to its degradation in the lysosome. Deubiquitination by USP10 in early endosomes enhances its endocytic recycling to the cell membrane. Ubiquitinated by RNF185 during ER stress. Ubiquitinated by MARCHF2.

It localises to the apical cell membrane. The protein resides in the early endosome membrane. It is found in the cell membrane. Its subcellular location is the recycling endosome membrane. The protein localises to the endoplasmic reticulum membrane. It localises to the nucleus. It catalyses the reaction ATP + H2O + closed Cl(-) channel = ADP + phosphate + open Cl(-) channel.. The catalysed reaction is chloride(in) = chloride(out). It carries out the reaction hydrogencarbonate(in) = hydrogencarbonate(out). The enzyme catalyses ATP + H2O = ADP + phosphate + H(+). Its function is as follows. Epithelial ion channel that plays an important role in the regulation of epithelial ion and water transport and fluid homeostasis. Mediates the transport of chloride ions across the cell membrane. Possesses an intrinsic ATPase activity and utilizes ATP to gate its channel; the passive flow of anions through the channel is gated by cycles of ATP binding and hydrolysis by the ATP-binding domains. The ion channel is also permeable to HCO(3)(-); selectivity depends on the extracellular chloride concentration. Exerts its function also by modulating the activity of other ion channels and transporters. Contributes to the regulation of the pH and the ion content of the epithelial fluid layer. Modulates the activity of the epithelial sodium channel (ENaC) complex, in part by regulating the cell surface expression of the ENaC complex. May regulate bicarbonate secretion and salvage in epithelial cells by regulating the transporter SLC4A7. Can inhibit the chloride channel activity of ANO1. Plays a role in the chloride and bicarbonate homeostasis during sperm epididymal maturation and capacitation. This chain is Cystic fibrosis transmembrane conductance regulator, found in Saimiri boliviensis boliviensis (Bolivian squirrel monkey).